We begin with the raw amino-acid sequence, 447 residues long: Clusterin (447 aa).

The N-terminal stretch at 1-21 is a signal peptide; that stretch reads MKILLLCVALLLTWDNGMVLG. The Nuclear localization signal signature appears at 77-80; the sequence is KKKK. Cystine bridges form between Cys101–Cys312, Cys112–Cys304, Cys115–Cys301, Cys120–Cys294, and Cys128–Cys284. The N-linked (GlcNAc...) asparagine glycan is linked to Asn102. Ser132 carries the post-translational modification Phosphoserine. N-linked (GlcNAc...) asparagine glycans are attached at residues Asn144, Asn290, Asn327, Asn353, and Asn373. A Phosphoserine modification is found at Ser394. The short motif at 441 to 445 is the Nuclear localization signal element; it reads RRKSR.

The protein belongs to the clusterin family. As to quaternary structure, antiparallel disulfide-linked heterodimer of an alpha chain and a beta chain. Self-associates and forms higher oligomers. Interacts with a broad range of misfolded proteins, including APP, APOC2 and LYZ. Slightly acidic pH promotes interaction with misfolded proteins. Forms high-molecular weight oligomers upon interaction with misfolded proteins. Interacts with APOA1, LRP2, CLUAP1 and PON1. Interacts with the complement membrane attack complex. Interacts (via alpha chain) with XRCC6. Interacts with SYVN1, COMMD1, BTRC, CUL1 and with ubiquitin and SCF (SKP1-CUL1-F-box protein) E3 ubiquitin-protein ligase complexes. Interacts (via alpha chain) with BAX in stressed cells, where BAX undergoes a conformation change leading to association with the mitochondrial membrane. Does not interact with BAX in unstressed cells. Found in a complex with LTF, CLU, EPPIN and SEMG1. Interacts (immaturely glycosylated pre-secreted form) with HSPA5; this interaction promotes CLU stability and facilitates stress-induced CLU retrotranslocation from the secretory pathway to the mitochondria, thereby reducing stress-induced apoptosis by stabilizing mitochondrial membrane integrity. Interacts with BCL2L1; this interaction releases and activates BAX and promotes cell death. Interacts with TGFBR2 and ACVR1. Interacts (secreted form) with STMN3; this interaction may act as an important modulator during neuronal differentiation. Interacts with VLDLR and LRP8. In terms of processing, proteolytically cleaved on its way through the secretory system, probably within the Golgi lumen. Proteolytic cleavage is not necessary for its chaperone activity. All non-secreted forms are not proteolytically cleaved. Chaperone activity of uncleaved forms is dependent on a non-reducing environment. Post-translationally, polyubiquitinated, leading to proteasomal degradation. Under cellular stress, the intracellular level of cleaved form is reduced due to proteasomal degradation. Extensively glycosylated with sulfated N-linked carbohydrates. About 30% of the protein mass is comprised of complex N-linked carbohydrate. Endoplasmic reticulum (ER) stress induces changes in glycosylation status and increases level of hypoglycosylated forms. Core carbohydrates are essential for chaperone activity. Non-secreted forms are hypoglycosylated or unglycosylated. In terms of tissue distribution, detected in Sertoli cells (at protein level). Detected in cultured Sertoli cells, testis, epididymis, liver and brain.

It localises to the secreted. The protein localises to the nucleus. It is found in the cytoplasm. The protein resides in the mitochondrion membrane. Its subcellular location is the cytosol. It localises to the microsome. The protein localises to the endoplasmic reticulum. It is found in the mitochondrion. The protein resides in the perinuclear region. Its subcellular location is the cytoplasmic vesicle. It localises to the secretory vesicle. The protein localises to the chromaffin granule. In terms of biological role, functions as extracellular chaperone that prevents aggregation of non native proteins. Prevents stress-induced aggregation of blood plasma proteins. Inhibits formation of amyloid fibrils by APP, APOC2, B2M, CALCA, CSN3, SNCA and aggregation-prone LYZ variants (in vitro). Does not require ATP. Maintains partially unfolded proteins in a state appropriate for subsequent refolding by other chaperones, such as HSPA8/HSC70. Does not refold proteins by itself. Binding to cell surface receptors triggers internalization of the chaperone-client complex and subsequent lysosomal or proteasomal degradation. When secreted, protects cells against apoptosis and against cytolysis by complement: inhibits assembly of the complement membrane attack complex (MAC) by preventing polymerization of C9 pore component of the MAC complex. Intracellular forms interact with ubiquitin and SCF (SKP1-CUL1-F-box protein) E3 ubiquitin-protein ligase complexes and promote the ubiquitination and subsequent proteasomal degradation of target proteins. Promotes proteasomal degradation of COMMD1 and IKBKB. Modulates NF-kappa-B transcriptional activity. Following stress, promotes apoptosis. Inhibits apoptosis when associated with the mitochondrial membrane by interference with BAX-dependent release of cytochrome c into the cytoplasm. Plays a role in the regulation of cell proliferation. An intracellular form suppresses stress-induced apoptosis by stabilizing mitochondrial membrane integrity through interaction with HSPA5. Secreted form does not affect caspase or BAX-mediated intrinsic apoptosis and TNF-induced NF-kappa-B-activity. Secreted form act as an important modulator during neuronal differentiation through interaction with STMN3. Plays a role in the clearance of immune complexes that arise during cell injury. The chain is Clusterin from Rattus norvegicus (Rat).